A 515-amino-acid polypeptide reads, in one-letter code: Probable multifunctional siroheme biosynthesis protein HemA (515 aa).

NAD(+)-binding positions include 26–27 and 47–48; these read SL and IR. Positions 26–174 are glutamyl-tRNA reductase; sequence SLDYKSAAID…TAAKKAKTEI (149 aa). L-glutamyl-tRNA(Glu) contacts are provided by residues 68-71, S127, E132, and Q138; that span reads TCNR. C69 (nucleophile) is an active-site residue. NADP(+) is bound at residue 206-211; that stretch reads GNGEIG. A precorrin-2 dehydrogenase /sirohydrochlorin ferrochelatase region spans residues 367–507; sequence FPLFIDLSGK…SLVKSVAEQI (141 aa).

In the N-terminal section; belongs to the glutamyl-tRNA reductase family. The protein in the C-terminal section; belongs to the precorrin-2 dehydrogenase / sirohydrochlorin ferrochelatase family. In terms of assembly, homodimer.

It catalyses the reaction (S)-4-amino-5-oxopentanoate + tRNA(Glu) + NADP(+) = L-glutamyl-tRNA(Glu) + NADPH + H(+). The catalysed reaction is precorrin-2 + NAD(+) = sirohydrochlorin + NADH + 2 H(+). It carries out the reaction siroheme + 2 H(+) = sirohydrochlorin + Fe(2+). It participates in cofactor biosynthesis; adenosylcobalamin biosynthesis; sirohydrochlorin from precorrin-2: step 1/1. Its pathway is porphyrin-containing compound metabolism; siroheme biosynthesis; siroheme from sirohydrochlorin: step 1/1. The protein operates within porphyrin-containing compound metabolism; siroheme biosynthesis; sirohydrochlorin from precorrin-2: step 1/1. It functions in the pathway porphyrin-containing compound metabolism; protoporphyrin-IX biosynthesis; 5-aminolevulinate from L-glutamyl-tRNA(Glu): step 1/2. Functionally, multifunctional enzyme that catalyzes the NADPH-dependent reduction of glutamyl-tRNA(Glu) to glutamate 1-semialdehyde (GSA), the NAD-dependent ring dehydrogenation of precorrin-2 to sirohydrochlorin and finally, the ferrochelation of sirohydrochlorin to yield siroheme. The protein is Probable multifunctional siroheme biosynthesis protein HemA of Ruminiclostridium josui (Clostridium josui).